The primary structure comprises 79 residues: Schistosomin (79 aa).

In terms of processing, contains four disulfide bonds. In terms of tissue distribution, growth-controlling neurosecretory light green cells, in the cerebral ganglia of the CNS.

The protein localises to the secreted. In terms of biological role, anti-gonadotropic neuropeptide. It also decreases the binding capacity of calfluxin to membrane-bound receptors of the albumen gland. This leads to inhibition of the reproductive activities of the infected snail. This is Schistosomin from Lymnaea stagnalis (Great pond snail).